Consider the following 840-residue polypeptide: N-acetyltransferase ESCO1 (840 aa).

Positions 1–25 (MMSIQEKSKENSSKVTKKSDDKNSE) are enriched in basic and acidic residues. The segment at 1–188 (MMSIQEKSKE…VLEVKSDSKE (188 aa)) is disordered. Composition is skewed to polar residues over residues 46–58 (KSQAKSSSESKIN), 65–74 (RMSTRSSKAA), and 81–96 (KSINKNTVTVRGYSQE). Residues 131–140 (VSRRSLRSRE) show a composition bias toward basic and acidic residues. The span at 141-153 (IQGQVQAVKQSLP) shows a compositional bias: polar residues. The span at 161–170 (SSTQSKSNKT) shows a compositional bias: low complexity. A compositionally biased stretch (basic and acidic residues) spans 178–188 (KVLEVKSDSKE). S200 carries the post-translational modification Phosphoserine. 2 disordered regions span residues 221 to 300 (TQGS…KSKR) and 318 to 338 (NVEVKKESSQMESVKEEKPTE). A compositionally biased stretch (polar residues) spans 267-278 (HTQVNTNTTLPK). The segment covering 319 to 338 (VEVKKESSQMESVKEEKPTE) has biased composition (basic and acidic residues). K332 is covalently cross-linked (Glycyl lysine isopeptide (Lys-Gly) (interchain with G-Cter in SUMO2)). S412 carries the post-translational modification Phosphoserine. 2 disordered regions span residues 486-505 (ANEIKPSDPPLDNQMKHSFD) and 542-582 (TGEN…KCNS). A compositionally biased stretch (polar residues) spans 551-565 (APQQHSILSNQTSKS). The CCHH-type zinc finger occupies 617-641 (VSCNVCGMLYTASNPEDETQHLLFH). Residues 772-774 (IWV), 780-785 (RKKIAS), and 812-814 (TPD) each bind acetyl-CoA.

The protein belongs to the acetyltransferase family. ECO subfamily. The subunit structure is controversial. Monomer. Homodimer. Post-translationally, phosphorylated during mitosis, when associated with chromosomes. In terms of tissue distribution, widely expressed. Expressed in heart, brain, liver, placenta, lung, kidney and pancreas. Highly expressed in muscle.

It localises to the nucleus. The protein localises to the chromosome. The enzyme catalyses L-lysyl-[protein] + acetyl-CoA = N(6)-acetyl-L-lysyl-[protein] + CoA + H(+). Functionally, acetyltransferase required for the establishment of sister chromatid cohesion. Couples the processes of cohesion and DNA replication to ensure that only sister chromatids become paired together. In contrast to the structural cohesins, the deposition and establishment factors are required only during S phase. Acts by mediating the acetylation of cohesin component SMC3. The chain is N-acetyltransferase ESCO1 (ESCO1) from Homo sapiens (Human).